Consider the following 65-residue polypeptide: Gallinacin-1 alpha (65 aa).

A signal peptide spans 1–19 (MRIVYLLLPFILLLAQGAA). The propeptide occupies 20 to 25 (GSSQAL). Intrachain disulfides connect C31/C59, C38/C53, and C43/C60.

Belongs to the beta-defensin family.

The protein resides in the secreted. The protein localises to the cytoplasmic granule. Functionally, has bactericidal activity. Potent activity against E.coli ML-35, L.monocytogenes EGD and C.albicans. The sequence is that of Gallinacin-1 alpha from Gallus gallus (Chicken).